A 146-amino-acid polypeptide reads, in one-letter code: Small ribosomal subunit protein uS13 (146 aa).

Positions 119-146 (ARGKKVRGQRTRSTGRKGRTVGVVRRKR) are disordered.

This sequence belongs to the universal ribosomal protein uS13 family. Part of the 30S ribosomal subunit. Forms a loose heterodimer with protein S19. Forms two bridges to the 50S subunit in the 70S ribosome.

Its function is as follows. Located at the top of the head of the 30S subunit, it contacts several helices of the 16S rRNA. In the 70S ribosome it contacts the 23S rRNA (bridge B1a) and protein L5 of the 50S subunit (bridge B1b), connecting the 2 subunits; these bridges are implicated in subunit movement. The polypeptide is Small ribosomal subunit protein uS13 (Archaeoglobus fulgidus (strain ATCC 49558 / DSM 4304 / JCM 9628 / NBRC 100126 / VC-16)).